The following is a 353-amino-acid chain: Methionine import ATP-binding protein MetN (353 aa).

In terms of domain architecture, ABC transporter spans 6–249 (LKNVDVDFPQ…PKQELTKKFV (244 aa)). 41 to 48 (GFSGAGKS) serves as a coordination point for ATP.

It belongs to the ABC transporter superfamily. Methionine importer (TC 3.A.1.24) family. In terms of assembly, the complex is composed of two ATP-binding proteins (MetN), two transmembrane proteins (MetI) and a solute-binding protein (MetQ).

Its subcellular location is the cell membrane. It carries out the reaction L-methionine(out) + ATP + H2O = L-methionine(in) + ADP + phosphate + H(+). It catalyses the reaction D-methionine(out) + ATP + H2O = D-methionine(in) + ADP + phosphate + H(+). Part of the ABC transporter complex MetNIQ involved in methionine import. Responsible for energy coupling to the transport system. The protein is Methionine import ATP-binding protein MetN of Lactobacillus acidophilus (strain ATCC 700396 / NCK56 / N2 / NCFM).